The primary structure comprises 242 residues: Proteasome subunit alpha (242 aa).

This sequence belongs to the peptidase T1A family. The 20S proteasome core is composed of 14 alpha and 14 beta subunits that assemble into four stacked heptameric rings, resulting in a barrel-shaped structure. The two inner rings, each composed of seven catalytic beta subunits, are sandwiched by two outer rings, each composed of seven alpha subunits. The catalytic chamber with the active sites is on the inside of the barrel. Has a gated structure, the ends of the cylinder being occluded by the N-termini of the alpha-subunits. Is capped at one or both ends by the proteasome regulatory ATPase, PAN.

The protein resides in the cytoplasm. With respect to regulation, the formation of the proteasomal ATPase PAN-20S proteasome complex, via the docking of the C-termini of PAN into the intersubunit pockets in the alpha-rings, triggers opening of the gate for substrate entry. Interconversion between the open-gate and close-gate conformations leads to a dynamic regulation of the 20S proteasome proteolysis activity. In terms of biological role, component of the proteasome core, a large protease complex with broad specificity involved in protein degradation. The protein is Proteasome subunit alpha of Sulfolobus acidocaldarius (strain ATCC 33909 / DSM 639 / JCM 8929 / NBRC 15157 / NCIMB 11770).